The sequence spans 254 residues: Ubiquinone/menaquinone biosynthesis C-methyltransferase UbiE (254 aa).

Residues T77, D98, 126–127, and S143 contribute to the S-adenosyl-L-methionine site; that span reads NA.

This sequence belongs to the class I-like SAM-binding methyltransferase superfamily. MenG/UbiE family.

The enzyme catalyses a 2-demethylmenaquinol + S-adenosyl-L-methionine = a menaquinol + S-adenosyl-L-homocysteine + H(+). The catalysed reaction is a 2-methoxy-6-(all-trans-polyprenyl)benzene-1,4-diol + S-adenosyl-L-methionine = a 5-methoxy-2-methyl-3-(all-trans-polyprenyl)benzene-1,4-diol + S-adenosyl-L-homocysteine + H(+). The protein operates within quinol/quinone metabolism; menaquinone biosynthesis; menaquinol from 1,4-dihydroxy-2-naphthoate: step 2/2. It participates in cofactor biosynthesis; ubiquinone biosynthesis. Methyltransferase required for the conversion of demethylmenaquinol (DMKH2) to menaquinol (MKH2) and the conversion of 2-polyprenyl-6-methoxy-1,4-benzoquinol (DDMQH2) to 2-polyprenyl-3-methyl-6-methoxy-1,4-benzoquinol (DMQH2). This chain is Ubiquinone/menaquinone biosynthesis C-methyltransferase UbiE, found in Blochmanniella floridana.